Consider the following 435-residue polypeptide: Sex peptide receptor (435 aa).

Residues 1 to 93 are Extracellular-facing; that stretch reads MDNYTDVLYQ…PLEYAMPLYG (93 aa). Residues 94–114 form a helical membrane-spanning segment; the sequence is YCMPFLLIITIISNSLIVLVL. At 115–124 the chain is on the cytoplasmic side; that stretch reads SKKSMATPTN. Residues 125–145 form a helical membrane-spanning segment; it reads FVLMGMAICDMLTVIFPAPGL. The Extracellular segment spans residues 146–168; sequence WYMYTFGNHYKPLHPVSMCLAYS. The chain crosses the membrane as a helical span at residues 169-189; sequence IFNEIMPAMCHTISVWLTLAL. Residues 190 to 211 are Cytoplasmic-facing; that stretch reads AVQRYIYVCHAPMARTWCTMPR. A helical transmembrane segment spans residues 212-229; that stretch reads VRRCTAYIALLAFLHQLP. Topologically, residues 230–276 are extracellular; the sequence is RFFDRTYMPLVIEWNGSPTEVCHLETSMWVHDYIGVDLYYTSYYLFR. The helical transmembrane segment at 277-297 threads the bilayer; that stretch reads VLFVHLLPCIILVTLNILLFA. The Cytoplasmic portion of the chain corresponds to 298-327; the sequence is AMRQAQERRKLLFRENRKKECKKLRETNCT. A helical transmembrane segment spans residues 328-348; sequence TLMLIVVVSVFLLAEIPIAVV. The Extracellular segment spans residues 349 to 368; sequence TAMHIVSSLIIEFLDYGLAN. The chain crosses the membrane as a helical span at residues 369 to 389; the sequence is ICIMLTNFFLVFSYPINFGIY. Residues 390–435 are Cytoplasmic-facing; sequence CGMSRQFRETFKEIFLGRLMAKKDSSTKYSIVNGARTCTNTNETVL.

It belongs to the G-protein coupled receptor 1 family. In terms of tissue distribution, in the female, expressed in the reproductive organs; strongly expressed in the spermathecae and the lower oviduct. No expression in the male reproductive organs. In the central nervous system of both sexes, it is expressed in the brain and ventral nerve cord (VNC); strongly expressed in the ventral regions of the suboesophageal ganglion, the cervical connective and in many nerve roots of the brain and VNC. Expressed in the s-LNvs and l-LNvs pdf neurons (at protein level).

It localises to the cell membrane. In terms of biological role, receptor for two functionally unrelated ligands; SP (A70A) for controlling reproductive behaviors and MIP for controlling sleep behavior. MIP-SPR pathway functions as a sleep homeostat which perceives the need for sleep and stabilizes it by providing a slow-acting inhibitory input to the fly arousal system that involve the pigment dispersing factor (pdf) neurons. SP-SPR is one of the multiple SP pathways that induce female post-mating behavioral responses (PMR) such as the suppression of mating receptivity and initiation of egg laying. The PMR switch is achieved by mediating the synaptic output of neurons such as those expressing fruitless (fru), double sex (dsx) and pickpocket (ppk). The sequence is that of Sex peptide receptor from Drosophila melanogaster (Fruit fly).